A 341-amino-acid chain; its full sequence is tRNA N6-adenosine threonylcarbamoyltransferase (341 aa).

Fe cation-binding residues include His117 and His121. Residues 140–144 (VVSGG), Asp173, Gly186, and Asn278 contribute to the substrate site. Asp306 is a binding site for Fe cation.

The protein belongs to the KAE1 / TsaD family. The cofactor is Fe(2+).

The protein resides in the cytoplasm. It catalyses the reaction L-threonylcarbamoyladenylate + adenosine(37) in tRNA = N(6)-L-threonylcarbamoyladenosine(37) in tRNA + AMP + H(+). Required for the formation of a threonylcarbamoyl group on adenosine at position 37 (t(6)A37) in tRNAs that read codons beginning with adenine. Is involved in the transfer of the threonylcarbamoyl moiety of threonylcarbamoyl-AMP (TC-AMP) to the N6 group of A37, together with TsaE and TsaB. TsaD likely plays a direct catalytic role in this reaction. The protein is tRNA N6-adenosine threonylcarbamoyltransferase of Symbiobacterium thermophilum (strain DSM 24528 / JCM 14929 / IAM 14863 / T).